The chain runs to 25 residues: uncharacterized protein (25 aa).

The protein localises to the plastid. Its subcellular location is the chloroplast. This is an uncharacterized protein from Trieres chinensis (Marine centric diatom).